The chain runs to 220 residues: Riboflavin kinase (220 aa).

The tract at residues methionine 1 to asparagine 92 is H-T-H motif-like. A riboflavin kinase region spans residues isoleucine 93–alanine 220. Glycine 102–lysine 107 is a CDP binding site. Mg(2+) contacts are provided by threonine 131 and asparagine 133. Residues threonine 188 and glutamate 195 each coordinate FMN. Residue lysine 200 to arginine 203 coordinates CDP.

The protein belongs to the archaeal riboflavin kinase family. The cofactor is Mg(2+).

The enzyme catalyses riboflavin + CTP = CDP + FMN + H(+). Its pathway is cofactor biosynthesis; FMN biosynthesis; FMN from riboflavin (CTP route): step 1/1. Functionally, catalyzes the CTP-dependent phosphorylation of riboflavin (vitamin B2) to form flavin mononucleotide (FMN). This is Riboflavin kinase (ribK) from Thermoplasma volcanium (strain ATCC 51530 / DSM 4299 / JCM 9571 / NBRC 15438 / GSS1).